A 51-amino-acid polypeptide reads, in one-letter code: Large ribosomal subunit protein bL33 (51 aa).

Belongs to the bacterial ribosomal protein bL33 family.

The protein is Large ribosomal subunit protein bL33 of Francisella philomiragia subsp. philomiragia (strain ATCC 25017 / CCUG 19701 / FSC 153 / O#319-036).